We begin with the raw amino-acid sequence, 71 residues long: High-potential iron-sulfur protein (71 aa).

Gln-1 is modified (pyrrolidone carboxylic acid). Cys-37, Cys-40, Cys-50, and Cys-64 together coordinate [4Fe-4S] cluster.

The protein belongs to the high-potential iron-sulfur protein (HiPIP) family. Homodimer.

Its function is as follows. Specific class of high-redox-potential 4Fe-4S ferredoxins. Functions in anaerobic electron transport in most purple and in some other photosynthetic bacteria and in at least one genus (Paracoccus) of halophilic, denitrifying bacteria. The sequence is that of High-potential iron-sulfur protein (hip) from Halomonas halodenitrificans (strain ATCC 12084 / NCIMB 8669) (Paracoccus halodenitrificans).